Consider the following 544-residue polypeptide: Chaperonin GroEL (544 aa).

ATP contacts are provided by residues 30 to 33 (TLGP), lysine 51, 87 to 91 (DGTTT), glycine 415, 479 to 481 (NAA), and aspartate 495.

It belongs to the chaperonin (HSP60) family. In terms of assembly, forms a cylinder of 14 subunits composed of two heptameric rings stacked back-to-back. Interacts with the co-chaperonin GroES.

It is found in the cytoplasm. It carries out the reaction ATP + H2O + a folded polypeptide = ADP + phosphate + an unfolded polypeptide.. Together with its co-chaperonin GroES, plays an essential role in assisting protein folding. The GroEL-GroES system forms a nano-cage that allows encapsulation of the non-native substrate proteins and provides a physical environment optimized to promote and accelerate protein folding. The polypeptide is Chaperonin GroEL (Francisella tularensis subsp. novicida (strain U112)).